A 475-amino-acid polypeptide reads, in one-letter code: Ribulose bisphosphate carboxylase large chain (475 aa).

The propeptide occupies 1-2 (MS). At Pro3 the chain carries N-acetylproline. Lys14 is modified (N6,N6,N6-trimethyllysine). Residues Asn123 and Thr173 each contribute to the substrate site. Lys175 (proton acceptor) is an active-site residue. Residue Lys177 participates in substrate binding. 3 residues coordinate Mg(2+): Lys201, Asp203, and Glu204. Lys201 is modified (N6-carboxylysine). Residue His294 is the Proton acceptor of the active site. Substrate is bound by residues Arg295, His327, and Ser379.

It belongs to the RuBisCO large chain family. Type I subfamily. As to quaternary structure, heterohexadecamer of 8 large chains and 8 small chains; disulfide-linked. The disulfide link is formed within the large subunit homodimers. Requires Mg(2+) as cofactor. Post-translationally, the disulfide bond which can form in the large chain dimeric partners within the hexadecamer appears to be associated with oxidative stress and protein turnover.

Its subcellular location is the plastid. It is found in the chloroplast. It carries out the reaction 2 (2R)-3-phosphoglycerate + 2 H(+) = D-ribulose 1,5-bisphosphate + CO2 + H2O. The enzyme catalyses D-ribulose 1,5-bisphosphate + O2 = 2-phosphoglycolate + (2R)-3-phosphoglycerate + 2 H(+). Its function is as follows. RuBisCO catalyzes two reactions: the carboxylation of D-ribulose 1,5-bisphosphate, the primary event in carbon dioxide fixation, as well as the oxidative fragmentation of the pentose substrate in the photorespiration process. Both reactions occur simultaneously and in competition at the same active site. This Pinus longaeva (Great Basin bristlecone pine) protein is Ribulose bisphosphate carboxylase large chain.